The sequence spans 370 residues: Subtilisin-like protease (370 aa).

Residues 1-17 (MIASIVFFIVLVDGVAT) form the signal peptide. Active-site charge relay system residues include D13, H35, and S190. Residues 18–261 (GSPNALVTDF…FGEVSPSRLE (244 aa)) enclose the Peptidase S8 domain. The P/Homo B domain occupies 240-370 (RVTDRWTHRN…TTEGTCHGIR (131 aa)).

The protein belongs to the peptidase S8 family.

This is Subtilisin-like protease (ORF47) from Ictalurid herpesvirus 1 (strain Auburn) (IcHV-1).